The primary structure comprises 89 residues: Small ribosomal subunit protein uS15 (89 aa).

This sequence belongs to the universal ribosomal protein uS15 family. Part of the 30S ribosomal subunit. Forms a bridge to the 50S subunit in the 70S ribosome, contacting the 23S rRNA.

One of the primary rRNA binding proteins, it binds directly to 16S rRNA where it helps nucleate assembly of the platform of the 30S subunit by binding and bridging several RNA helices of the 16S rRNA. Functionally, forms an intersubunit bridge (bridge B4) with the 23S rRNA of the 50S subunit in the ribosome. The sequence is that of Small ribosomal subunit protein uS15 from Mesorhizobium japonicum (strain LMG 29417 / CECT 9101 / MAFF 303099) (Mesorhizobium loti (strain MAFF 303099)).